The primary structure comprises 245 residues: Ribonuclease P protein component 3 (245 aa).

Belongs to the eukaryotic/archaeal RNase P protein component 3 family. Consists of a catalytic RNA component and at least 4-5 protein subunits.

It is found in the cytoplasm. It catalyses the reaction Endonucleolytic cleavage of RNA, removing 5'-extranucleotides from tRNA precursor.. Functionally, part of ribonuclease P, a protein complex that generates mature tRNA molecules by cleaving their 5'-ends. The sequence is that of Ribonuclease P protein component 3 from Methanothermobacter thermautotrophicus (strain ATCC 29096 / DSM 1053 / JCM 10044 / NBRC 100330 / Delta H) (Methanobacterium thermoautotrophicum).